The primary structure comprises 435 residues: MDILQSINDFNEAKQVIPGGVNSPVRAFGSVGGTPRFIAKGKGAYIYDEDDNEYIDFVQSWGPLIFGHANEVIESALSLAIKDGLSFGAPTEKETTLVKQIIALSGSAEKMRLVNSGTEATMSALRLARAYSNKDDIIKFEGCYHGHSDSLLVSAGSGCATFGTPSSPGVPNDITKHTLVARYNDIESVRACFEQSKNVACVIIEALAGNMGFVPADKKFMQDLRALCDEYNALLIIDEVMSGFRAGLKGAIGLYDVQADLVTYGKVIGGGMPLAAFGGRADIMDMLSPVGGVYQAGTLSGNPIAVSAGLATLLQIKANPTLYEHLEVLAKRLIKGLKEAAQSYEIPLQVDCRGSMFGFFFNQKEVKNFDDAKCSDTAMFARFHQKMLDKGVYFACSQFETGFICSAMNEMIIDEVIMKAKAVFGEITHEIESRI.

Lysine 266 bears the N6-(pyridoxal phosphate)lysine mark.

Belongs to the class-III pyridoxal-phosphate-dependent aminotransferase family. HemL subfamily. Homodimer. It depends on pyridoxal 5'-phosphate as a cofactor.

It is found in the cytoplasm. It catalyses the reaction (S)-4-amino-5-oxopentanoate = 5-aminolevulinate. Its pathway is porphyrin-containing compound metabolism; protoporphyrin-IX biosynthesis; 5-aminolevulinate from L-glutamyl-tRNA(Glu): step 2/2. This Helicobacter hepaticus (strain ATCC 51449 / 3B1) protein is Glutamate-1-semialdehyde 2,1-aminomutase.